The primary structure comprises 388 residues: Na(+)/H(+) antiporter NhaA (388 aa).

Transmembrane regions (helical) follow at residues 14–34, 59–79, 95–115, 125–145, 154–174, 177–197, 200–220, 222–242, 257–277, 295–315, 328–348, and 362–382; these read TIGILLIIATLLALFLENSPL, LLLWVNDGLMAVFFFYVGLEI, TFPAIAALGGMVVPALLFASL, GWAIPTATDIAFALGVLSLLG, VFLMTLAIVDDLGAIIVIALF, TKLSLTSLVVASIALTILFIM, MCVISKGAYILVGVALWVSVL, SGVHATLAGVALALLIPYRIN, GLHLWVNFFILPLFAFANAGV, IMLGLFIGKQLGVFGFGYLAV, LIQFYGVAVLAGIGFTMSLFI, and ADKLAVLIGSLLSGIWGYIVL.

This sequence belongs to the NhaA Na(+)/H(+) (TC 2.A.33) antiporter family.

The protein resides in the cell inner membrane. It carries out the reaction Na(+)(in) + 2 H(+)(out) = Na(+)(out) + 2 H(+)(in). In terms of biological role, na(+)/H(+) antiporter that extrudes sodium in exchange for external protons. The protein is Na(+)/H(+) antiporter NhaA of Nitratiruptor sp. (strain SB155-2).